A 151-amino-acid chain; its full sequence is Deoxyuridine 5'-triphosphate nucleotidohydrolase (151 aa).

Residues 70–72, Asn83, 87–89, and Met97 each bind substrate; these read RSG and LID.

Belongs to the dUTPase family. The cofactor is Mg(2+).

It catalyses the reaction dUTP + H2O = dUMP + diphosphate + H(+). Its pathway is pyrimidine metabolism; dUMP biosynthesis; dUMP from dCTP (dUTP route): step 2/2. Its function is as follows. This enzyme is involved in nucleotide metabolism: it produces dUMP, the immediate precursor of thymidine nucleotides and it decreases the intracellular concentration of dUTP so that uracil cannot be incorporated into DNA. This is Deoxyuridine 5'-triphosphate nucleotidohydrolase from Pseudomonas aeruginosa (strain UCBPP-PA14).